A 257-amino-acid chain; its full sequence is Type III pantothenate kinase (257 aa).

Residue 7-14 participates in ATP binding; it reads DIGNSHTV. Residue 106–109 coordinates substrate; that stretch reads GTDR. D108 functions as the Proton acceptor in the catalytic mechanism. D128 is a binding site for K(+). T132 serves as a coordination point for ATP. Residue T184 coordinates substrate.

It belongs to the type III pantothenate kinase family. Homodimer. NH4(+) is required as a cofactor. The cofactor is K(+).

The protein localises to the cytoplasm. The enzyme catalyses (R)-pantothenate + ATP = (R)-4'-phosphopantothenate + ADP + H(+). It participates in cofactor biosynthesis; coenzyme A biosynthesis; CoA from (R)-pantothenate: step 1/5. Functionally, catalyzes the phosphorylation of pantothenate (Pan), the first step in CoA biosynthesis. The chain is Type III pantothenate kinase from Nocardioides sp. (strain ATCC BAA-499 / JS614).